Consider the following 231-residue polypeptide: Large ribosomal subunit protein uL1 (231 aa).

This sequence belongs to the universal ribosomal protein uL1 family. In terms of assembly, part of the 50S ribosomal subunit.

Its function is as follows. Binds directly to 23S rRNA. The L1 stalk is quite mobile in the ribosome, and is involved in E site tRNA release. In terms of biological role, protein L1 is also a translational repressor protein, it controls the translation of the L11 operon by binding to its mRNA. This Mesomycoplasma hyopneumoniae (strain 232) (Mycoplasma hyopneumoniae) protein is Large ribosomal subunit protein uL1.